The primary structure comprises 271 residues: Non-homologous end joining protein Ku (271 aa).

One can recognise a Ku domain in the interval lysine 12 to serine 194. Positions glutamate 225 to asparagine 249 are disordered.

The protein belongs to the prokaryotic Ku family. As to quaternary structure, homodimer. Interacts with LigD.

With LigD forms a non-homologous end joining (NHEJ) DNA repair enzyme, which repairs dsDNA breaks with reduced fidelity. Binds linear dsDNA with 5'- and 3'- overhangs but not closed circular dsDNA nor ssDNA. Recruits and stimulates the ligase activity of LigD. The sequence is that of Non-homologous end joining protein Ku from Methylocella silvestris (strain DSM 15510 / CIP 108128 / LMG 27833 / NCIMB 13906 / BL2).